A 350-amino-acid chain; its full sequence is S-adenosylmethionine:tRNA ribosyltransferase-isomerase (350 aa).

It belongs to the QueA family. As to quaternary structure, monomer.

The protein localises to the cytoplasm. It carries out the reaction 7-aminomethyl-7-carbaguanosine(34) in tRNA + S-adenosyl-L-methionine = epoxyqueuosine(34) in tRNA + adenine + L-methionine + 2 H(+). The protein operates within tRNA modification; tRNA-queuosine biosynthesis. Transfers and isomerizes the ribose moiety from AdoMet to the 7-aminomethyl group of 7-deazaguanine (preQ1-tRNA) to give epoxyqueuosine (oQ-tRNA). This is S-adenosylmethionine:tRNA ribosyltransferase-isomerase from Vibrio vulnificus (strain CMCP6).